Consider the following 807-residue polypeptide: Dual specificity protein phosphatase PPS1 (807 aa).

A Tyrosine-protein phosphatase domain is found at Leu-585–Asn-783. A catalytic region spans residues Leu-593–Thr-807. Catalysis depends on Cys-725, which acts as the Phosphocysteine intermediate.

The protein belongs to the protein-tyrosine phosphatase family. Non-receptor class dual specificity subfamily.

The catalysed reaction is O-phospho-L-tyrosyl-[protein] + H2O = L-tyrosyl-[protein] + phosphate. It carries out the reaction O-phospho-L-seryl-[protein] + H2O = L-seryl-[protein] + phosphate. The enzyme catalyses O-phospho-L-threonyl-[protein] + H2O = L-threonyl-[protein] + phosphate. Its function is as follows. Protein phosphatase with specificity for serine, threonine, and tyrosine residues; has a role in the DNA synthesis phase of the cell cycle. The protein is Dual specificity protein phosphatase PPS1 (PPS1) of Saccharomyces cerevisiae (strain ATCC 204508 / S288c) (Baker's yeast).